Reading from the N-terminus, the 542-residue chain is Chaperonin GroEL 1 (542 aa).

ATP contacts are provided by residues 29 to 32 (TLGP), 86 to 90 (DGTTT), Gly413, 477 to 479 (NAA), and Asp493.

Belongs to the chaperonin (HSP60) family. Forms a cylinder of 14 subunits composed of two heptameric rings stacked back-to-back. Interacts with the co-chaperonin GroES.

The protein localises to the cytoplasm. It carries out the reaction ATP + H2O + a folded polypeptide = ADP + phosphate + an unfolded polypeptide.. Its function is as follows. Together with its co-chaperonin GroES, plays an essential role in assisting protein folding. The GroEL-GroES system forms a nano-cage that allows encapsulation of the non-native substrate proteins and provides a physical environment optimized to promote and accelerate protein folding. The chain is Chaperonin GroEL 1 from Renibacterium salmoninarum (strain ATCC 33209 / DSM 20767 / JCM 11484 / NBRC 15589 / NCIMB 2235).